A 135-amino-acid polypeptide reads, in one-letter code: Methylglyoxal synthase (135 aa).

In terms of domain architecture, MGS-like spans 1 to 135; that stretch reads MQKTLALVAH…GLYERAVPEF (135 aa). Residues His-10, Lys-14, 36-39, and 56-57 contribute to the substrate site; these read TGTT and SG. Asp-62 functions as the Proton donor/acceptor in the catalytic mechanism. His-89 is a binding site for substrate.

This sequence belongs to the methylglyoxal synthase family.

It catalyses the reaction dihydroxyacetone phosphate = methylglyoxal + phosphate. Catalyzes the formation of methylglyoxal from dihydroxyacetone phosphate. This Pseudoalteromonas atlantica (strain T6c / ATCC BAA-1087) protein is Methylglyoxal synthase.